A 552-amino-acid chain; its full sequence is MANIVVSGEQLQEAFREVAAMVDSTVGATAGPRGNTIGISKPYGGPEVTKDGYKVMKGIKPEKPLHSAIVSTIAQSASQCNDKVGDGTTTCSILTSNMIMEASKSIAAGNDRICIKNGIQKAKDVILKEITSMSRTISLEKMDEVAQVAIISANGDKDIGNSIADAVKKVGKEGVITVEESKGSKELEVELTTGMQFDRGYLSPYFVTNNEKMSVELDDPYLLITEKKLNIIQPLLPILEAIFKSGKPLFIIAEDVEGEALSTLVINKLRGLKVAAVKAPGFGDRRKEMLEDIAALTGAKYVIKDELGIKMEDLTLEDLGTAKNVKITKDNTTIVSEDSDCDKQNRVNARINQIKSQIETSTSDYDKEKLRERLAKLSGGVAVLKVGGATEVEVKERRDRVEDALHATRAAIEEGIVPGGGVALLYAASALDKLKASSDEEQIGINIVKKVLSAPIKRLVKNAGLESAVIIDYLIKQNDKELIYNVEAMNYANASTAGVIDPAKVVRIAFETAVSVASALITTESMIVDLPNKEENASSPMGAGAMGGMGGF.

ATP contacts are provided by residues 29 to 32 (TAGP), K50, 86 to 90 (DGTTT), G420, and D501.

Belongs to the chaperonin (HSP60) family. In terms of assembly, forms a cylinder of 14 subunits composed of two heptameric rings stacked back-to-back. Interacts with the co-chaperonin GroES.

The protein localises to the cytoplasm. It catalyses the reaction ATP + H2O + a folded polypeptide = ADP + phosphate + an unfolded polypeptide.. In terms of biological role, together with its co-chaperonin GroES, plays an essential role in assisting protein folding. The GroEL-GroES system forms a nano-cage that allows encapsulation of the non-native substrate proteins and provides a physical environment optimized to promote and accelerate protein folding. The sequence is that of Chaperonin GroEL from Wolbachia pipientis subsp. Culex pipiens (strain wPip).